The sequence spans 440 residues: Putative sodium-coupled neutral amino acid transporter 8 (440 aa).

Helical transmembrane passes span 29-49 (AIFI…PWAF), 58-78 (AIMV…ILGY), 100-120 (IGKL…VAFL), 156-176 (FAIT…KEIS), 183-203 (ILGT…YYVM), 223-243 (MFSV…CVTI), 255-275 (WAAV…FTGI), 300-320 (VIIA…IILL), 350-370 (VVIT…VPDI), 373-393 (VISV…GLCL), and 418-438 (VVCG…EIIA).

This sequence belongs to the amino acid/polyamine transporter 2 family.

It localises to the membrane. Putative sodium-dependent amino acid/proton antiporter. The polypeptide is Putative sodium-coupled neutral amino acid transporter 8 (slc38a8) (Xenopus tropicalis (Western clawed frog)).